A 237-amino-acid chain; its full sequence is Ribonuclease PH (237 aa).

Residues Arg86 and 124 to 126 (GTR) contribute to the phosphate site.

This sequence belongs to the RNase PH family. Homohexameric ring arranged as a trimer of dimers.

The catalysed reaction is tRNA(n+1) + phosphate = tRNA(n) + a ribonucleoside 5'-diphosphate. In terms of biological role, phosphorolytic 3'-5' exoribonuclease that plays an important role in tRNA 3'-end maturation. Removes nucleotide residues following the 3'-CCA terminus of tRNAs; can also add nucleotides to the ends of RNA molecules by using nucleoside diphosphates as substrates, but this may not be physiologically important. Probably plays a role in initiation of 16S rRNA degradation (leading to ribosome degradation) during starvation. The polypeptide is Ribonuclease PH (Methylobacterium sp. (strain 4-46)).